The following is a 393-amino-acid chain: Golgi membrane protein 1 (393 aa).

Met-1 is subject to N-acetylmethionine. Topologically, residues 1 to 12 (MMGLGNGRRSMK) are cytoplasmic. Residues 13–35 (SPPLILAALVACVIVLGFNYWIA) form a helical; Signal-anchor for type II membrane protein membrane-spanning segment. Residues 36–393 (SSRSVELQTR…QVGIHIPQQA (358 aa)) lie on the Lumenal side of the membrane. Residues 40-183 (VELQTRIVEL…IEEVIRKRNE (144 aa)) adopt a coiled-coil conformation. N-linked (GlcNAc...) asparagine glycosylation is found at Asn-109 and Asn-144. 2 disordered regions span residues 180–247 (KRNE…QVQN) and 284–352 (HTQL…LAGN). Position 187 is a phosphoserine (Ser-187). 2 stretches are compositionally biased toward polar residues: residues 192-201 (ETNNQHQQAL) and 227-247 (NKSQ…QVQN). Residue Asn-227 is glycosylated (N-linked (GlcNAc...) asparagine). The segment covering 294 to 320 (RPEEDSQYPEREQLVIRDRQEQQRASE) has biased composition (basic and acidic residues). The segment covering 330 to 339 (DEYDMDENEA) has biased composition (acidic residues).

The protein belongs to the GOLM family. In terms of assembly, interacts with DYM. In terms of processing, glycosylated. Post-translationally, phosphorylation sites are present in the extracellular medium.

It localises to the golgi apparatus. The protein localises to the cis-Golgi network membrane. In terms of biological role, unknown. Cellular response protein to viral infection. This is Golgi membrane protein 1 (Golm1) from Mus musculus (Mouse).